The chain runs to 921 residues: Phototropin-1A (921 aa).

The segment covering 1–11 (MASKGTEGGHG) has biased composition (gly residues). Disordered stretches follow at residues 1-59 (MASK…SPFL) and 88-118 (TGLP…QSAA). The span at 40-51 (SSASSFRTAAAA) shows a compositional bias: low complexity. The span at 97–117 (RPSSGSARTSSEDNPQQQQSA) shows a compositional bias: polar residues. Residues 123–197 (VSEELRAALS…KIRQSLANGS (75 aa)) enclose the PAS 1 domain. FMN is bound by residues 172–177 (NCRFLQ), arginine 190, asparagine 205, asparagine 215, and glutamine 236. The residue at position 173 (cysteine 173) is an S-4a-FMN cysteine. Positions 197–251 (SNYCGRILNYKKDGTPFWNLLTIAPIKDEDGRLLKFIGMQVEVSKYTEGKKDTVV) constitute a PAC 1 domain. Residues 286–295 (RSLSESSNNT) show a composition bias toward polar residues. Disordered regions lie at residues 286–347 (RSLS…NRTR) and 364–390 (SVEK…ESFE). 2 stretches are compositionally biased toward basic and acidic residues: residues 312–321 (PSKRSSESGS) and 364–376 (SVEK…RDED). Residues 400-473 (RGIDLATTLE…RKIRDAIDNQ (74 aa)) enclose the PAS 2 domain. FMN-binding positions include 449 to 454 (NCRFLQ), arginine 467, asparagine 482, asparagine 492, and glutamine 513. S-4a-FMN cysteine is present on cysteine 450. In terms of domain architecture, PAC 2 spans 474–528 (AEVTVQLINYTKSGKKFWNLFHLQPMRDQKGDVQYFIGVQLDGTEHVQDDAAKEG). The region spanning 594–881 (FRPVKPLGSG…ANEIKGHPFF (288 aa)) is the Protein kinase domain. ATP-binding positions include 600-608 (LGSGDTGSV) and lysine 623. Aspartate 719 serves as the catalytic Proton acceptor.

Belongs to the protein kinase superfamily. Ser/Thr protein kinase family. Homodimer. It depends on FMN as a cofactor. Autophosphorylated in response to blue light irradiation. In terms of processing, 2 molecules of FMN bind covalently to cysteines after exposure to blue light and are reversed in the dark. As to expression, highly expressed in coleoptiles of dark-grown seedlings.

The enzyme catalyses L-seryl-[protein] + ATP = O-phospho-L-seryl-[protein] + ADP + H(+). It catalyses the reaction L-threonyl-[protein] + ATP = O-phospho-L-threonyl-[protein] + ADP + H(+). Its function is as follows. Protein kinase that acts as a blue light photoreceptor in a signal-transduction pathway for phototropic responses. Regulates a wide range of physiological activities in plants that maximize the efficiency of photosynthesis, such as chloroplast relocations, stomata opening, and leaf expansion. The chain is Phototropin-1A (PHOT1A) from Oryza sativa subsp. japonica (Rice).